Reading from the N-terminus, the 229-residue chain is 2-C-methyl-D-erythritol 4-phosphate cytidylyltransferase (229 aa).

It belongs to the IspD/TarI cytidylyltransferase family. IspD subfamily.

It catalyses the reaction 2-C-methyl-D-erythritol 4-phosphate + CTP + H(+) = 4-CDP-2-C-methyl-D-erythritol + diphosphate. The protein operates within isoprenoid biosynthesis; isopentenyl diphosphate biosynthesis via DXP pathway; isopentenyl diphosphate from 1-deoxy-D-xylulose 5-phosphate: step 2/6. In terms of biological role, catalyzes the formation of 4-diphosphocytidyl-2-C-methyl-D-erythritol from CTP and 2-C-methyl-D-erythritol 4-phosphate (MEP). This Bacillus pumilus (strain SAFR-032) protein is 2-C-methyl-D-erythritol 4-phosphate cytidylyltransferase.